Reading from the N-terminus, the 189-residue chain is MKQSSPTYLKHHFLIAMPHMADPNFAQTVTYLVEHNEQGAMGLVINRPSGLNLAEVLEQLKPDALPPARCQHIDIYNGGPVQTDRGFVLHPSGLSYQSTLELGELAMSTSQDVLFAIAAGTGPEKSLISLGYAGWEAGQLEAELSDNAWLTCPADPAILFDLPAEERLSAAAARLGVNLSLLTAQAGHA.

It belongs to the UPF0301 (AlgH) family.

This Pseudomonas aeruginosa (strain UCBPP-PA14) protein is UPF0301 protein PA14_05290.